The sequence spans 391 residues: Ferrochelatase (391 aa).

Positions 196 and 281 each coordinate Fe cation.

It belongs to the ferrochelatase family.

It localises to the cytoplasm. The catalysed reaction is heme b + 2 H(+) = protoporphyrin IX + Fe(2+). It functions in the pathway porphyrin-containing compound metabolism; protoheme biosynthesis; protoheme from protoporphyrin-IX: step 1/1. In terms of biological role, catalyzes the ferrous insertion into protoporphyrin IX. This is Ferrochelatase from Parasynechococcus marenigrum (strain WH8102).